The chain runs to 420 residues: L-rhamnose isomerase (420 aa).

Residues His-262, Asp-294, and Asp-296 each contribute to the Mn(2+) site.

This sequence belongs to the rhamnose isomerase family. In terms of assembly, homotetramer. Requires Mn(2+) as cofactor.

Its subcellular location is the cytoplasm. It carries out the reaction L-rhamnopyranose = L-rhamnulose. Its pathway is carbohydrate degradation; L-rhamnose degradation; glycerone phosphate from L-rhamnose: step 1/3. Functionally, catalyzes the interconversion of L-rhamnose and L-rhamnulose. The sequence is that of L-rhamnose isomerase from Pectobacterium carotovorum subsp. carotovorum (strain PC1).